The chain runs to 800 residues: Transducin beta-like protein 3 (800 aa).

An N-acetylalanine modification is found at Ala-2. 13 WD repeats span residues 64-105 (EDQE…RLWK), 107-146 (IHTA…GTHH), 149-190 (GSPG…CLAV), 193-232 (AHYS…ATRT), 245-284 (LPEE…CVHA), 290-329 (GPGR…LRKQ), 332-372 (GYSE…CQIL), 374-413 (GHTD…EVAC), 419-459 (GHTH…LSKG), 477-516 (CHDK…LLGT), 519-560 (GHRR…KTFE), 562-602 (HDAS…RTLD), and 604-642 (HEDK…EQAE). Ser-257 carries the phosphoserine modification. A Glycyl lysine isopeptide (Lys-Gly) (interchain with G-Cter in SUMO2) cross-link involves residue Lys-407.

As to quaternary structure, part of the small subunit (SSU) processome, composed of more than 70 proteins and the RNA chaperone small nucleolar RNA (snoRNA) U3.

The protein localises to the nucleus. The protein resides in the nucleolus. Its function is as follows. Part of the small subunit (SSU) processome, first precursor of the small eukaryotic ribosomal subunit. During the assembly of the SSU processome in the nucleolus, many ribosome biogenesis factors, an RNA chaperone and ribosomal proteins associate with the nascent pre-rRNA and work in concert to generate RNA folding, modifications, rearrangements and cleavage as well as targeted degradation of pre-ribosomal RNA by the RNA exosome. The polypeptide is Transducin beta-like protein 3 (TBL3) (Bos taurus (Bovine)).